Consider the following 418-residue polypeptide: FXa-directed anticoagulant (418 aa).

The N-terminal stretch at 1–19 (MNLKIAIIVICQLVYFTQG) is a signal peptide. N-linked (GlcNAc...) asparagine glycans are attached at residues Asn117, Asn167, and Asn286.

The protein belongs to the serpin family. As to quaternary structure, interacts with host coagulation factor X/F10 (activated). As to expression, female salivary gland (at protein level).

It is found in the secreted. In terms of biological role, anticoagulant and antithrombotic serpin-type protein inhibiting host coagulation factor Xa (F10). Does not inhibit host uPA/urokinase-type plasminogen activator (PLAU), kallikrein, granzyme B (GZMB), matriptase, elastase, alpha-chymotrypsin, chymase, coagulation factor XIIa (F12), coagulation factor XIa (F11), plasmin (PLG), thrombin (F2), trypsin and cathepsin G (CTSG). Inhibits factor Xa-induced production of pro-inflammatory cytokines, such as MCP-1/CCL2, TNF-alpha/TNF, IL-1beta/IL1B, IL6, IL8/CXCL8 and IL18, in human endothelial cells. Inhibits factor Xa-induced up-regulation of protease-activated receptors (PARs) F2R, F2RL1 and F2RL2 in human endothelial cells. Prevents activation of host F2RL1 via inhibition of F2RL1 cleavage by host factor Xa. Inhibits factor Xa-induced up-regulation of adhesion molecules ICAM1 and VCAM1 in human endothelial cells. Inhibits factor Xa-induced up-regulation of phosphorylated ERK1/2 in human endothelial cells. Inhibits factor Xa-induced activation of transcription factor NF-kappa-B in human endothelial cells. Reduces factor Xa-induced edema in the host. Reduces factor Xa-induced endothelial permeability in the host. The protein is FXa-directed anticoagulant of Aedes albopictus (Asian tiger mosquito).